A 364-amino-acid polypeptide reads, in one-letter code: Mannose-1-phosphate guanyltransferase (364 aa).

Belongs to the transferase hexapeptide repeat family.

It localises to the cytoplasm. It carries out the reaction alpha-D-mannose 1-phosphate + GTP + H(+) = GDP-alpha-D-mannose + diphosphate. The protein operates within nucleotide-sugar biosynthesis; GDP-alpha-D-mannose biosynthesis; GDP-alpha-D-mannose from alpha-D-mannose 1-phosphate (GTP route): step 1/1. Its function is as follows. Involved in cell wall synthesis where it is required for glycosylation. Involved in cell cycle progression through cell-size checkpoint. The chain is Mannose-1-phosphate guanyltransferase (mpg1) from Aspergillus oryzae (strain ATCC 42149 / RIB 40) (Yellow koji mold).